Here is a 100-residue protein sequence, read N- to C-terminus: Small ribosomal subunit protein uS14c (100 aa).

This sequence belongs to the universal ribosomal protein uS14 family. In terms of assembly, part of the 30S ribosomal subunit.

It is found in the plastid. It localises to the chloroplast. In terms of biological role, binds 16S rRNA, required for the assembly of 30S particles. This chain is Small ribosomal subunit protein uS14c, found in Liriodendron tulipifera (Tuliptree).